The primary structure comprises 183 residues: Thioredoxin/glutathione peroxidase BtuE (183 aa).

C37 is a catalytic residue.

Belongs to the glutathione peroxidase family. BtuE subfamily.

Its subcellular location is the periplasm. It carries out the reaction 2 glutathione + H2O2 = glutathione disulfide + 2 H2O. The enzyme catalyses a hydroperoxide + [thioredoxin]-dithiol = an alcohol + [thioredoxin]-disulfide + H2O. In terms of biological role, non-specific peroxidase that can use thioredoxin or glutathione as a reducing agent. In vitro, utilizes preferentially thioredoxin A to decompose hydrogen peroxide as well as cumene-, tert-butyl-, and linoleic acid hydroperoxides, suggesting that it may have one or more organic hydroperoxide as its physiological substrate. This chain is Thioredoxin/glutathione peroxidase BtuE, found in Escherichia coli (strain K12).